The primary structure comprises 276 residues: Aquaporin-6 (276 aa).

The Cytoplasmic portion of the chain corresponds to 1 to 22; that stretch reads MEPGLCNRAYLLVGGLWTAISK. The helical transmembrane segment at 23–43 threads the bilayer; that stretch reads ALFAEFLATGLYVFFGVGSVL. The Extracellular segment spans residues 44–51; it reads PWPVALPS. A helical membrane pass occupies residues 52–70; that stretch reads VLQVAITFNLATATAVQIS. The Cytoplasmic portion of the chain corresponds to 71-75; it reads WKTSG. Residues 76-85 constitute an intramembrane region (discontinuously helical); the sequence is AHANPAVTLA. Positions 79–81 match the NPA 1 motif; it reads NPA. Over 86-96 the chain is Cytoplasmic; sequence YLVGSHISLPR. A helical membrane pass occupies residues 97–118; that stretch reads AVAYIAAQLAGATVGAALLYGV. Topologically, residues 119 to 138 are extracellular; the sequence is TPGGVRETLGVNVVHNSTST. Residue asparagine 134 is glycosylated (N-linked (GlcNAc...) asparagine). The chain crosses the membrane as a helical span at residues 139–159; that stretch reads GQAVAVELVLTLQLVLCVFAS. At 160-165 the chain is on the cytoplasmic side; it reads MDSRQT. The helical transmembrane segment at 166 to 185 threads the bilayer; it reads LGSPAAMIGTSVALGHLIGI. The Extracellular segment spans residues 186–189; the sequence is YFTG. The discontinuously helical intramembrane region spans 190 to 202; sequence CSMNPARSFGPAV. The NPA 2 motif lies at 193–195; that stretch reads NPA. Topologically, residues 203 to 210 are extracellular; sequence IVGKFAVH. The helical transmembrane segment at 211-231 threads the bilayer; sequence WIFWVGPLTGAVLASLIYNFI. Over 232–276 the chain is Cytoplasmic; that stretch reads LFPDTKTVAQRLAILVGTTKVEKVVDLEPQKKESQTNSEDTEVSV.

The protein belongs to the MIP/aquaporin (TC 1.A.8) family. As to quaternary structure, homotetramer; each monomer provides an independent solute pore. Post-translationally, N-glycosylated. As to expression, kidney.

It is found in the cytoplasmic vesicle membrane. The catalysed reaction is nitrate(in) = nitrate(out). The enzyme catalyses iodide(out) = iodide(in). It carries out the reaction bromide(in) = bromide(out). It catalyses the reaction chloride(in) = chloride(out). The catalysed reaction is Na(+)(in) = Na(+)(out). The enzyme catalyses H2O(in) = H2O(out). It carries out the reaction CO2(out) = CO2(in). It catalyses the reaction NH4(+)(in) = NH4(+)(out). Its activity is regulated as follows. Activated by mercury and pH-gated, anion permeability is observed at pH 5.5 and increases markedly at pH 4.0. Selectivity for chloride increases at low pH. The water channel activity is stimulated by mercury by opposition to other aquaporins. Functionally, aquaporins form homotetrameric transmembrane channels, with each monomer independently mediating water transport across the plasma membrane along its osmotic gradient. Unlike classical aquaporins, AQP6 is an intracellular channel with selective anion permeability, particularly for nitrate, and exhibits very low water permeability. It may also facilitate the transport of gases, such as CO2 and NH4(+), as demonstrated in vitro. This chain is Aquaporin-6, found in Rattus norvegicus (Rat).